Reading from the N-terminus, the 142-residue chain is Large ribosomal subunit protein uL11 (142 aa).

This sequence belongs to the universal ribosomal protein uL11 family. As to quaternary structure, part of the ribosomal stalk of the 50S ribosomal subunit. Interacts with L10 and the large rRNA to form the base of the stalk. L10 forms an elongated spine to which L12 dimers bind in a sequential fashion forming a multimeric L10(L12)X complex. One or more lysine residues are methylated.

Functionally, forms part of the ribosomal stalk which helps the ribosome interact with GTP-bound translation factors. In Sinorhizobium medicae (strain WSM419) (Ensifer medicae), this protein is Large ribosomal subunit protein uL11.